The following is a 501-amino-acid chain: Glutamyl-tRNA(Gln) amidotransferase subunit A (501 aa).

Catalysis depends on charge relay system residues K80 and S155. S179 functions as the Acyl-ester intermediate in the catalytic mechanism.

Belongs to the amidase family. GatA subfamily. As to quaternary structure, heterotrimer of A, B and C subunits.

The catalysed reaction is L-glutamyl-tRNA(Gln) + L-glutamine + ATP + H2O = L-glutaminyl-tRNA(Gln) + L-glutamate + ADP + phosphate + H(+). Its function is as follows. Allows the formation of correctly charged Gln-tRNA(Gln) through the transamidation of misacylated Glu-tRNA(Gln) in organisms which lack glutaminyl-tRNA synthetase. The reaction takes place in the presence of glutamine and ATP through an activated gamma-phospho-Glu-tRNA(Gln). The sequence is that of Glutamyl-tRNA(Gln) amidotransferase subunit A from Cupriavidus necator (strain ATCC 17699 / DSM 428 / KCTC 22496 / NCIMB 10442 / H16 / Stanier 337) (Ralstonia eutropha).